A 491-amino-acid chain; its full sequence is GTPase Der (491 aa).

EngA-type G domains are found at residues 3–166 (PVVA…AEAM) and 200–373 (IKLA…DSAT). GTP-binding positions include 9–16 (GRPNVGKS), 56–60 (DTGGI), 118–121 (NKVD), 206–213 (GKPNVGKS), 253–257 (DTAGV), and 318–321 (NKWD). The region spanning 374 to 458 (RRVSTSMLTR…PIQIRFQEGD (85 aa)) is the KH-like domain. Residues 472–491 (QERRRKRALSHINDRKTKGE) form a disordered region.

It belongs to the TRAFAC class TrmE-Era-EngA-EngB-Septin-like GTPase superfamily. EngA (Der) GTPase family. As to quaternary structure, associates with the 50S ribosomal subunit.

In terms of biological role, GTPase that plays an essential role in the late steps of ribosome biogenesis. This is GTPase Der from Shewanella denitrificans (strain OS217 / ATCC BAA-1090 / DSM 15013).